We begin with the raw amino-acid sequence, 227 residues long: MAQNDTVKLIGSWSSPYSLRARVALHLKSVKYEYLDEPDVLKEKSELLLKSNPIHKKVPVLLHGDLSISESLNVVQYVDEAWPSVPSILPSDAYDRASARFWAQYIDDKCFAAVDAVVGAKDDEGKMAAVGKLMECLAILEETFQKSSKGLGFFGGETIGYLDIACSALLGPISVIEAFSGVKFLRQETTPGLIKWAERFRAHEAVKPYMPTVEEVVAFAKQKFNVQ.

In terms of domain architecture, GST N-terminal spans 5 to 86 (DTVKLIGSWS…YVDEAWPSVP (82 aa)). Residues 15-16 (SP), 43-44 (EK), 57-58 (KV), and 70-71 (ES) each bind glutathione. In terms of domain architecture, GST C-terminal spans 92–224 (DAYDRASARF…EVVAFAKQKF (133 aa)). Phosphothreonine is present on Thr-158.

The protein belongs to the GST superfamily. Tau family.

The protein localises to the cytoplasm. Its subcellular location is the cytosol. It carries out the reaction RX + glutathione = an S-substituted glutathione + a halide anion + H(+). In vitro, possesses glutathione S-transferase activity toward 1-chloro-2,4-dinitrobenzene (CDNB) and benzyl isothiocyanate (BITC). May be involved in the conjugation of reduced glutathione to a wide number of exogenous and endogenous hydrophobic electrophiles and have a detoxification role against certain herbicides. This is Glutathione S-transferase U13 (GSTU13) from Arabidopsis thaliana (Mouse-ear cress).